We begin with the raw amino-acid sequence, 903 residues long: HTH-type transcriptional regulator MalT (903 aa).

Position 39 to 46 (39 to 46 (CPAGYGKT)) interacts with ATP. The HTH luxR-type domain maps to 832-897 (ELIRTSPLTQ…DAVQQAQRLL (66 aa)). Positions 856-875 (NDQIAGELEVAATTIKTHIR) form a DNA-binding region, H-T-H motif.

The protein belongs to the MalT family. As to quaternary structure, monomer in solution. Oligomerizes to an active state in the presence of the positive effectors ATP and maltotriose.

With respect to regulation, activated by ATP and maltotriose, which are both required for DNA binding. Its function is as follows. Positively regulates the transcription of the maltose regulon whose gene products are responsible for uptake and catabolism of malto-oligosaccharides. Specifically binds to the promoter region of its target genes, recognizing a short DNA motif called the MalT box. The sequence is that of HTH-type transcriptional regulator MalT from Yersinia enterocolitica serotype O:8 / biotype 1B (strain NCTC 13174 / 8081).